Consider the following 581-residue polypeptide: Fibrous sheath-interacting protein 1 (581 aa).

The segment at 1–77 (MDIIKGNLDG…SNDDKQESCS (77 aa)) is disordered. Residues 14-30 (PASNSRIRPGSRSSNAS) are compositionally biased toward polar residues. The segment covering 52-77 (GKEDHSESSNTENRRTSNDDKQESCS) has biased composition (basic and acidic residues). Residue Ser-87 is modified to Phosphoserine. A coiled-coil region spans residues 105–153 (EPKLKELDSQLQDAIQKMKKLDKILAKKQRREKEIKKQGLEMRIKLWEE). Disordered stretches follow at residues 338 to 365 (SSFS…VTPG) and 555 to 581 (HLKL…CKEP). 2 stretches are compositionally biased toward basic and acidic residues: residues 344–360 (LENR…ERNM) and 569–581 (QETK…CKEP).

Belongs to the FSIP1 family.

This chain is Fibrous sheath-interacting protein 1 (FSIP1), found in Homo sapiens (Human).